A 275-amino-acid polypeptide reads, in one-letter code: Large ribosomal subunit protein uL2c (275 aa).

Residues 225-275 (MNPCDHPHGGGEGRSPIGRPRPVSPWGKPALGQRTRKGHKYSDQMILRRRK) are disordered.

The protein belongs to the universal ribosomal protein uL2 family. As to quaternary structure, part of the 50S ribosomal subunit.

The protein localises to the plastid. Its subcellular location is the chloroplast. The chain is Large ribosomal subunit protein uL2c (rpl2) from Oltmannsiellopsis viridis (Marine flagellate).